The sequence spans 424 residues: Ancylostoma secreted protein (424 aa).

Positions 1–18 (MFSPVIVSVIFTIAFCDA) are cleaved as a signal peptide. SCP domains are found at residues 41-177 (LDFH…SCIY) and 242-387 (LSVH…VCQY).

The protein belongs to the CRISP family.

Its subcellular location is the secreted. Associated with the transition to parasitism by infective hookworm larvae. The polypeptide is Ancylostoma secreted protein (ASP) (Ancylostoma caninum (Dog hookworm)).